The chain runs to 1073 residues: Lon protease homolog, mitochondrial (1073 aa).

Residues 1-27 (MIKASKCNKARALFLVRTSIPRTFIRN) constitute a mitochondrion transit peptide. Basic and acidic residues-rich tracts occupy residues 69-107 (FDSK…RKDI) and 113-123 (YDIKEETDSKP). The segment at 69 to 173 (FDSKKEKQPS…DKEFLSPSDA (105 aa)) is disordered. Over residues 132–150 (SSKSSISSSSGGANNNNNN) the composition is skewed to low complexity. The segment covering 158 to 167 (DDGSPKDKEF) has biased composition (basic and acidic residues). The region spanning 177-395 (PPFLAIAMKD…LSLQLLQVEA (219 aa)) is the Lon N-terminal domain. 543–550 (GPPGTGKT) lines the ATP pocket. Residues 775 to 785 (SVISDKAKKDA) are compositionally biased toward basic and acidic residues. Residues 775-821 (SVISDKAKKDAGSSSIESNDSNTEAKVSTTTENEKKQEQKQKQDEEI) form a disordered region. Polar residues predominate over residues 790–805 (IESNDSNTEAKVSTTT). Positions 806 to 821 (ENEKKQEQKQKQDEEI) are enriched in basic and acidic residues. One can recognise a Lon proteolytic domain in the interval 856 to 1044 (TLNPGVATGL…SEVFEHLFKG (189 aa)). Active-site residues include Ser950 and Lys993.

Belongs to the peptidase S16 family. Homohexamer or homoheptamer. Organized in a ring with a central cavity.

It is found in the mitochondrion matrix. It carries out the reaction Hydrolysis of proteins in presence of ATP.. Functionally, ATP-dependent serine protease that mediates the selective degradation of misfolded, unassembled or oxidatively damaged polypeptides as well as certain short-lived regulatory proteins in the mitochondrial matrix. May also have a chaperone function in the assembly of inner membrane protein complexes. Participates in the regulation of mitochondrial gene expression and in the maintenance of the integrity of the mitochondrial genome. Binds to mitochondrial DNA in a site-specific manner. This is Lon protease homolog, mitochondrial from Candida dubliniensis (strain CD36 / ATCC MYA-646 / CBS 7987 / NCPF 3949 / NRRL Y-17841) (Yeast).